The primary structure comprises 474 residues: Sugar transporter ERD6-like 17 (474 aa).

Transmembrane regions (helical) follow at residues 27–47 (ITAC…SFGV), 76–96 (FATL…MVIG), 106–126 (FLCI…LLNF), 129–149 (IISG…IAEI), 159–180 (TFSN…GNFI), 184–204 (TLAL…FFVP), 266–286 (TLVV…AAVI), 302–322 (IGTT…LILV), 329–349 (PLLM…GVAF), 363–383 (ILSF…LGGL), 403–423 (IVTL…NFLF), and 429–449 (GTFF…WLLV).

Belongs to the major facilitator superfamily. Sugar transporter (TC 2.A.1.1) family. In terms of tissue distribution, expressed in young seedlings.

The protein localises to the membrane. Sugar transporter. The polypeptide is Sugar transporter ERD6-like 17 (Arabidopsis thaliana (Mouse-ear cress)).